The following is a 98-amino-acid chain: Protein FAM24A (98 aa).

A signal peptide spans 1–29 (MFDLRTKVMIGIASTLLIAAIMLITLVFC).

It belongs to the FAM24 family.

It localises to the secreted. The sequence is that of Protein FAM24A (Fam24a) from Mus musculus (Mouse).